The chain runs to 437 residues: Pyrophosphate--fructose 6-phosphate 1-phosphotransferase (437 aa).

A diphosphate-binding site is contributed by G27. A Mg(2+)-binding site is contributed by D122. Residues 147 to 149 (TID), 193 to 195 (MGR), E261, and 323 to 326 (YELR) contribute to the substrate site. D149 acts as the Proton acceptor in catalysis.

It belongs to the phosphofructokinase type A (PFKA) family. PPi-dependent PFK group II subfamily. Clade 'Short' sub-subfamily. Homotetramer. Requires Mg(2+) as cofactor. Mn(2+) serves as cofactor.

The protein localises to the cytoplasm. It catalyses the reaction beta-D-fructose 6-phosphate + diphosphate = beta-D-fructose 1,6-bisphosphate + phosphate + H(+). It participates in carbohydrate degradation; glycolysis; D-glyceraldehyde 3-phosphate and glycerone phosphate from D-glucose: step 3/4. With respect to regulation, activated by AMP. Probably promotes oligomerization of the enzyme. Catalyzes the phosphorylation of D-fructose 6-phosphate, the first committing step of glycolysis. Uses inorganic phosphate (PPi) as phosphoryl donor instead of ATP like common ATP-dependent phosphofructokinases (ATP-PFKs), which renders the reaction reversible, and can thus function both in glycolysis and gluconeogenesis. Consistently, PPi-PFK can replace the enzymes of both the forward (ATP-PFK) and reverse (fructose-bisphosphatase (FBPase)) reactions. The sequence is that of Pyrophosphate--fructose 6-phosphate 1-phosphotransferase from Naegleria fowleri (Brain eating amoeba).